Consider the following 519-residue polypeptide: Cytochrome P450 monooxygenase FPY7 (519 aa).

A helical membrane pass occupies residues 12-34; sequence SLSLRWKIIVTLLAIYTLRIIGT. Residue C465 coordinates heme.

This sequence belongs to the cytochrome P450 family. Heme is required as a cofactor.

It localises to the membrane. It participates in secondary metabolite biosynthesis. Cytochrome P450 monooxygenase; part of the gene cluster that mediates the biosynthesis of the gamma-pyrones fusapyrone (FPY) and deoxyfusapyrone (dFPY). FPY is an undecaketide and thus likely synthesized by the polyketide synthase FPY1 from acetyl-CoA functioning as starter unit and the addition of 10 malonyl-CoA extender units by successive Claisen-condensations. Next to this, FPY shares some rare features: C-glycosylated 4-deoxyglucose at C-3, a gem-dimethyl group at C-13, and an alpha-beta to beta-gamma double bond shift at C-20. During FPY biosynthesis mono-C-methyl groups are transferred to the tetra-, penta-, hexa- and heptaketide, while two C-methyl groups are transferred to the nonaketide, suggesting that the CMet domain is programmed to selectively catalyze two successive C-alpha-methylation reactions of the nonaketide, while other alpha-carbons are non- or mono-methylated only. While the origin of the 4'-deoxyglucose moiety remains opaque, its transfer to C-3 is most likely mediated by the C-glycosyltransferase FPY2. Next to this, the hydroxyl group present at C-33 and discriminating between FPY and dFPY, is likely to be installed by the cytochrome P450 monooxygenase FPY7. No putative function can be predicted for the remaining genes FPY3-FPY6. This chain is Cytochrome P450 monooxygenase FPY7, found in Fusarium mangiferae (Mango malformation disease fungus).